Consider the following 82-residue polypeptide: Putative defensin-like protein 48 (82 aa).

Residues 1–28 (MGIKTLIIFFHIFILAVLSSNNIILTSG) form the signal peptide. 4 disulfide bridges follow: Cys-39–Cys-80, Cys-43–Cys-67, Cys-53–Cys-78, and Cys-57–Cys-79.

Belongs to the DEFL family.

It is found in the secreted. In Arabidopsis thaliana (Mouse-ear cress), this protein is Putative defensin-like protein 48.